The sequence spans 243 residues: tRNA (guanine-N(1)-)-methyltransferase (243 aa).

S-adenosyl-L-methionine contacts are provided by residues G108 and 127–132; that span reads LGDFVL.

This sequence belongs to the RNA methyltransferase TrmD family. Homodimer.

The protein resides in the cytoplasm. The catalysed reaction is guanosine(37) in tRNA + S-adenosyl-L-methionine = N(1)-methylguanosine(37) in tRNA + S-adenosyl-L-homocysteine + H(+). Specifically methylates guanosine-37 in various tRNAs. This is tRNA (guanine-N(1)-)-methyltransferase from Streptococcus equi subsp. zooepidemicus (strain H70).